We begin with the raw amino-acid sequence, 308 residues long: Ribosomal RNA small subunit methyltransferase H (308 aa).

S-adenosyl-L-methionine contacts are provided by residues 32–34 (GGH), D52, F78, D100, and Q107.

It belongs to the methyltransferase superfamily. RsmH family.

Its subcellular location is the cytoplasm. It catalyses the reaction cytidine(1402) in 16S rRNA + S-adenosyl-L-methionine = N(4)-methylcytidine(1402) in 16S rRNA + S-adenosyl-L-homocysteine + H(+). Specifically methylates the N4 position of cytidine in position 1402 (C1402) of 16S rRNA. This is Ribosomal RNA small subunit methyltransferase H from Legionella pneumophila (strain Paris).